Here is a 134-residue protein sequence, read N- to C-terminus: ATP synthase epsilon chain (134 aa).

This sequence belongs to the ATPase epsilon chain family. As to quaternary structure, F-type ATPases have 2 components, CF(1) - the catalytic core - and CF(0) - the membrane proton channel. CF(1) has five subunits: alpha(3), beta(3), gamma(1), delta(1), epsilon(1). CF(0) has three main subunits: a, b and c.

It is found in the cell membrane. Functionally, produces ATP from ADP in the presence of a proton gradient across the membrane. The polypeptide is ATP synthase epsilon chain (Ruminiclostridium cellulolyticum (strain ATCC 35319 / DSM 5812 / JCM 6584 / H10) (Clostridium cellulolyticum)).